Consider the following 379-residue polypeptide: Mannan endo-1,4-beta-mannosidase 7 (379 aa).

Trp64 and Asn179 together coordinate substrate. The active-site Proton donor is Glu180. Tyr260 contributes to the substrate binding site. Glu300 acts as the Nucleophile in catalysis. Trp342 contributes to the substrate binding site.

The protein belongs to the glycosyl hydrolase 5 (cellulase A) family. As to expression, expression not detected.

It catalyses the reaction Random hydrolysis of (1-&gt;4)-beta-D-mannosidic linkages in mannans, galactomannans and glucomannans.. In Oryza sativa subsp. japonica (Rice), this protein is Mannan endo-1,4-beta-mannosidase 7 (MAN7).